The chain runs to 478 residues: Glycogen synthase (478 aa).

Lys16 is a binding site for ADP-alpha-D-glucose.

Belongs to the glycosyltransferase 1 family. Bacterial/plant glycogen synthase subfamily.

The catalysed reaction is [(1-&gt;4)-alpha-D-glucosyl](n) + ADP-alpha-D-glucose = [(1-&gt;4)-alpha-D-glucosyl](n+1) + ADP + H(+). It participates in glycan biosynthesis; glycogen biosynthesis. In terms of biological role, synthesizes alpha-1,4-glucan chains using ADP-glucose. The protein is Glycogen synthase of Lachnospira eligens (strain ATCC 27750 / DSM 3376 / VPI C15-48 / C15-B4) (Eubacterium eligens).